The sequence spans 305 residues: Nucleotide-binding protein Saro_2904 (305 aa).

Position 15–22 (15–22 (GLLGAGKT)) interacts with ATP. 68 to 71 (DTRT) contributes to the GTP binding site.

The protein belongs to the RapZ-like family.

In terms of biological role, displays ATPase and GTPase activities. The protein is Nucleotide-binding protein Saro_2904 of Novosphingobium aromaticivorans (strain ATCC 700278 / DSM 12444 / CCUG 56034 / CIP 105152 / NBRC 16084 / F199).